The primary structure comprises 455 residues: Ktr system potassium uptake protein B (455 aa).

Residues 27–47 traverse the membrane as a helical segment; it reads IILLSFLGVLLPSAVLLTLPV. Residues 54–74 lie within the membrane without spanning it; sequence SITDALFTATSAISVTGLGVV. 2 helical membrane-spanning segments follow: residues 86 to 106 and 141 to 161; these read ILLM…SAVL and IVTF…YRWV. Residues 169–189 lie within the membrane without spanning it; the sequence is GMFYALFHSISAFNNAGFALF. The next 2 helical transmembrane spans lie at 201–221 and 240–260; these read LVSF…TVIG and IMLI…WLLE. The stretch at 291–313 is an intramembrane region; that stretch reads FNSVDLTQFTQPALLIMIVLMLI. 2 consecutive transmembrane segments (helical) span residues 318-340 and 362-382; these read TSTG…WTFL and LAII…LMLT. An intramembrane segment occupies 390-410; that stretch reads VMFETISAFATVGLTAGLTAE. A helical membrane pass occupies residues 418–438; that stretch reads IMIVVMIIGRIGPLTLAYMLA.

It belongs to the TrkH potassium transport family. Ktr (TC 2.A.38.4) subfamily. As to quaternary structure, the uptake system is composed of KtrA and KtrB.

The protein resides in the cell inner membrane. K(+) transport is stimulated by Na(+). Part of the Na(+)-dependent high affinity K(+) uptake system KtrAB. KtrB is the K(+)-translocating subunit. The chain is Ktr system potassium uptake protein B (ktrB) from Vibrio alginolyticus.